The chain runs to 381 residues: RING-H2 finger protein ATL1 (381 aa).

Residues Met-1–Phe-31 are disordered. Residues Ile-46–Ile-66 traverse the membrane as a helical segment. Residues Cys-134–Arg-176 form an RING-type; atypical zinc finger. 2 disordered regions span residues Thr-249–Phe-269 and Arg-334–Arg-354. A compositionally biased stretch (polar residues) spans Ser-250–Ser-261.

This sequence belongs to the RING-type zinc finger family. ATL subfamily.

It is found in the membrane. It catalyses the reaction S-ubiquitinyl-[E2 ubiquitin-conjugating enzyme]-L-cysteine + [acceptor protein]-L-lysine = [E2 ubiquitin-conjugating enzyme]-L-cysteine + N(6)-ubiquitinyl-[acceptor protein]-L-lysine.. It participates in protein modification; protein ubiquitination. This chain is RING-H2 finger protein ATL1 (ATL1), found in Arabidopsis thaliana (Mouse-ear cress).